The chain runs to 378 residues: Putative glutamate--cysteine ligase 2 (378 aa).

This sequence belongs to the glutamate--cysteine ligase type 2 family. YbdK subfamily.

The enzyme catalyses L-cysteine + L-glutamate + ATP = gamma-L-glutamyl-L-cysteine + ADP + phosphate + H(+). Its function is as follows. ATP-dependent carboxylate-amine ligase which exhibits weak glutamate--cysteine ligase activity. The polypeptide is Putative glutamate--cysteine ligase 2 (Ectopseudomonas mendocina (strain ymp) (Pseudomonas mendocina)).